The following is a 504-amino-acid chain: UDP-N-acetylmuramoylalanine--D-glutamate ligase (504 aa).

129 to 135 provides a ligand contact to ATP; the sequence is GTNGKTT.

Belongs to the MurCDEF family.

It localises to the cytoplasm. It catalyses the reaction UDP-N-acetyl-alpha-D-muramoyl-L-alanine + D-glutamate + ATP = UDP-N-acetyl-alpha-D-muramoyl-L-alanyl-D-glutamate + ADP + phosphate + H(+). Its pathway is cell wall biogenesis; peptidoglycan biosynthesis. In terms of biological role, cell wall formation. Catalyzes the addition of glutamate to the nucleotide precursor UDP-N-acetylmuramoyl-L-alanine (UMA). In Burkholderia pseudomallei (strain 668), this protein is UDP-N-acetylmuramoylalanine--D-glutamate ligase.